The primary structure comprises 330 residues: Tryptophan--tRNA ligase (330 aa).

Residues 10-12 and 18-19 each bind ATP; these read QTT and GN. Residues 11 to 19 carry the 'HIGH' region motif; sequence TTGALHLGN. Aspartate 134 contacts L-tryptophan. ATP is bound by residues 146–148, isoleucine 186, and 195–199; these read GED and KMSKS. Residues 195-199 carry the 'KMSKS' region motif; the sequence is KMSKS.

This sequence belongs to the class-I aminoacyl-tRNA synthetase family. As to quaternary structure, homodimer.

The protein resides in the cytoplasm. The catalysed reaction is tRNA(Trp) + L-tryptophan + ATP = L-tryptophyl-tRNA(Trp) + AMP + diphosphate + H(+). Catalyzes the attachment of tryptophan to tRNA(Trp). In Rickettsia prowazekii (strain Madrid E), this protein is Tryptophan--tRNA ligase.